The chain runs to 197 residues: uncharacterized protein (197 aa).

This sequence belongs to the NAD(P)H dehydrogenase (quinone) family.

This is an uncharacterized protein from Bacillus subtilis (strain 168).